We begin with the raw amino-acid sequence, 304 residues long: MATH domain and coiled-coil domain-containing protein At2g42470 (304 aa).

Positions 6–123 constitute an MATH domain; the sequence is QTSFTFEIDN…NNKLIIEVQV (118 aa). Residues 219 to 292 adopt a coiled-coil conformation; that stretch reads FKVDWLKKKL…LKIELDRTRR (74 aa).

This chain is MATH domain and coiled-coil domain-containing protein At2g42470, found in Arabidopsis thaliana (Mouse-ear cress).